The primary structure comprises 354 residues: Protein Wnt-9a (354 aa).

Positions 1–15 (MALLRALLGLLACTP) are cleaved as a signal peptide. 5 disulfide bridges follow: Cys85-Cys96, Cys133-Cys141, Cys143-Cys160, Cys207-Cys221, and Cys209-Cys216. Residue Asn95 is glycosylated (N-linked (GlcNAc...) asparagine). Residue Ser213 is the site of O-palmitoleoyl serine; by PORCN attachment. The tract at residues 246–271 (GSTTNEATGEGDISPPKKSIPGHSDQ) is disordered. Cystine bridges form between Cys288–Cys313, Cys302–Cys308, Cys312–Cys352, Cys328–Cys343, Cys330–Cys340, and Cys335–Cys336.

The protein belongs to the Wnt family. Palmitoleoylation is required for efficient binding to frizzled receptors. Depalmitoleoylation leads to Wnt signaling pathway inhibition.

It localises to the secreted. The protein resides in the extracellular space. Its subcellular location is the extracellular matrix. In terms of biological role, ligand for members of the frizzled family of seven transmembrane receptors. Functions in the canonical Wnt/beta-catenin signaling pathway. Plays a role in embryonic chondrocyte maturation and in embryonic bone mineralization. The sequence is that of Protein Wnt-9a (WNT9A) from Gallus gallus (Chicken).